Here is a 218-residue protein sequence, read N- to C-terminus: Glutathione S-transferase Mu 2 (218 aa).

Positions 2–88 (PMTLGYWDIR…YLGRKHNLCG (87 aa)) constitute a GST N-terminal domain. 7–8 (YW) contacts glutathione. A phosphoserine mark is found at S27 and S44. Residues 43 to 46 (RSQW), K50, 59 to 60 (NL), and 72 to 73 (QS) each bind glutathione. Residues 90-214 (TEEERIRVDV…SKPIFAKMAF (125 aa)) enclose the GST C-terminal domain. Y116 provides a ligand contact to substrate. Position 117 is a phosphoserine (S117).

It belongs to the GST superfamily. Mu family. In terms of assembly, homodimer or heterodimer.

It localises to the cytoplasm. The catalysed reaction is RX + glutathione = an S-substituted glutathione + a halide anion + H(+). It carries out the reaction 11(S)-hydroxy-14(S),15(S)-epoxy-(5Z,8Z,12E)-eicosatrienoate + glutathione = (11S,15S)-dihydroxy-14(R)-S-glutathionyl-(5Z,8Z,12E)-eicosatrienoate. In terms of biological role, conjugation of reduced glutathione to a wide number of exogenous and endogenous hydrophobic electrophiles. Participates in the formation of novel hepoxilin regioisomers. The chain is Glutathione S-transferase Mu 2 from Rattus norvegicus (Rat).